The primary structure comprises 58 residues: Conotoxin Leo-T2 (58 aa).

The first 22 residues, 1–22 (MRCLPVFIILPLLIPSAPSVDA), serve as a signal peptide directing secretion. Positions 23-47 (QPMTEDDVPLASFHEQTLQELWNKR) are excised as a propeptide.

Belongs to the conotoxin T superfamily. In terms of processing, contains 2 disulfide bonds that can be either 'C1-C3, C2-C4' or 'C1-C4, C2-C3', since these disulfide connectivities have been observed for conotoxins with cysteine framework V (for examples, see AC P0DQQ7 and AC P81755). In terms of tissue distribution, expressed by the venom duct.

Its subcellular location is the secreted. The protein is Conotoxin Leo-T2 of Conus leopardus (Leopard cone).